Consider the following 446-residue polypeptide: tRNA-2-methylthio-N(6)-dimethylallyladenosine synthase (446 aa).

Residues 2–122 form the MTTase N-terminal domain; sequence KKAYVKSYGC…LPDLLRQSRE (121 aa). [4Fe-4S] cluster-binding residues include cysteine 11, cysteine 47, cysteine 85, cysteine 157, cysteine 161, and cysteine 164. Residues 143-375 enclose the Radical SAM core domain; it reads RNRGVTGFLT…QDLLDRQRHA (233 aa). Residues 378 to 440 form the TRAM domain; it reads AASVGTLTEI…SNSLFGETLE (63 aa).

This sequence belongs to the methylthiotransferase family. MiaB subfamily. In terms of assembly, monomer. The cofactor is [4Fe-4S] cluster.

The protein resides in the cytoplasm. It catalyses the reaction N(6)-dimethylallyladenosine(37) in tRNA + (sulfur carrier)-SH + AH2 + 2 S-adenosyl-L-methionine = 2-methylsulfanyl-N(6)-dimethylallyladenosine(37) in tRNA + (sulfur carrier)-H + 5'-deoxyadenosine + L-methionine + A + S-adenosyl-L-homocysteine + 2 H(+). In terms of biological role, catalyzes the methylthiolation of N6-(dimethylallyl)adenosine (i(6)A), leading to the formation of 2-methylthio-N6-(dimethylallyl)adenosine (ms(2)i(6)A) at position 37 in tRNAs that read codons beginning with uridine. In Methylorubrum extorquens (strain PA1) (Methylobacterium extorquens), this protein is tRNA-2-methylthio-N(6)-dimethylallyladenosine synthase.